Reading from the N-terminus, the 542-residue chain is Formate--tetrahydrofolate ligase (542 aa).

Residue 53–60 (TPAGEGKT) participates in ATP binding.

Belongs to the formate--tetrahydrofolate ligase family.

It catalyses the reaction (6S)-5,6,7,8-tetrahydrofolate + formate + ATP = (6R)-10-formyltetrahydrofolate + ADP + phosphate. The protein operates within one-carbon metabolism; tetrahydrofolate interconversion. The protein is Formate--tetrahydrofolate ligase of Thermotoga petrophila (strain ATCC BAA-488 / DSM 13995 / JCM 10881 / RKU-1).